Here is a 709-residue protein sequence, read N- to C-terminus: Ribosomal RNA large subunit methyltransferase K/L (709 aa).

Residues leucine 43 to phenylalanine 154 form the THUMP domain.

This sequence belongs to the methyltransferase superfamily. RlmKL family.

The protein localises to the cytoplasm. The enzyme catalyses guanosine(2445) in 23S rRNA + S-adenosyl-L-methionine = N(2)-methylguanosine(2445) in 23S rRNA + S-adenosyl-L-homocysteine + H(+). It catalyses the reaction guanosine(2069) in 23S rRNA + S-adenosyl-L-methionine = N(2)-methylguanosine(2069) in 23S rRNA + S-adenosyl-L-homocysteine + H(+). Specifically methylates the guanine in position 2445 (m2G2445) and the guanine in position 2069 (m7G2069) of 23S rRNA. This chain is Ribosomal RNA large subunit methyltransferase K/L, found in Shewanella baltica (strain OS155 / ATCC BAA-1091).